The primary structure comprises 103 residues: Histone H4 type VIII (103 aa).

Residues 1–14 (MSGRGKGGKGLGKG) are compositionally biased toward gly residues. The disordered stretch occupies residues 1-20 (MSGRGKGGKGLGKGGAKRHR). The residue at position 2 (S2) is an N-acetylserine. S2 is subject to Phosphoserine. R4 is subject to Asymmetric dimethylarginine; by PRMT1; alternate. R4 carries the citrulline; alternate modification. Omega-N-methylarginine; by PRMT1; alternate is present on R4. R4 is modified (symmetric dimethylarginine; by PRMT5 and PRMT7; alternate). N6-(2-hydroxyisobutyryl)lysine; alternate is present on residues K6, K9, K13, and K17. Residue K6 is modified to N6-acetyl-N6-methyllysine; alternate. An N6-acetyllysine mark is found at K6, K9, K13, and K17. An N6-butyryllysine; alternate mark is found at K6, K9, K13, and K17. K6 is modified (N6-glutaryllysine; alternate). 4 positions are modified to N6-lactoyllysine; alternate: K6, K9, K13, and K17. At K9 the chain carries N6-propionyllysine; alternate. K13 carries the post-translational modification N6-acetyl-N6-methyllysine; alternate. K13 is subject to N6-glutaryllysine; alternate. An N6-methyllysine; alternate modification is found at K13. The residue at position 17 (K17) is an N6-propionyllysine; alternate. An N6-methyllysine; alternate modification is found at K21. K21 is subject to N6,N6,N6-trimethyllysine; alternate. K21 is subject to N6,N6-dimethyllysine; alternate. N6-(2-hydroxyisobutyryl)lysine; alternate occurs at positions 32 and 45. The residue at position 32 (K32) is an N6-acetyllysine. An N6-butyryllysine; alternate mark is found at K32 and K45. Residue K32 is modified to N6-glutaryllysine; alternate. K32 carries the post-translational modification N6-lactoyllysine; alternate. Residues K32 and K45 each carry the N6-propionyllysine; alternate modification. The residue at position 32 (K32) is an N6-succinyllysine; alternate. K32 is covalently cross-linked (Glycyl lysine isopeptide (Lys-Gly) (interchain with G-Cter in UFM1); alternate). S48 bears the Phosphoserine mark. Y52 carries the post-translational modification Phosphotyrosine. At K60 the chain carries N6-acetyllysine. Residues K60, K78, and K80 each carry the N6-glutaryllysine; alternate modification. K60 carries the N6-(2-hydroxyisobutyryl)lysine modification. N6-(2-hydroxyisobutyryl)lysine; alternate is present on residues K78 and K80. An N6-butyryllysine; alternate mark is found at K78 and K80. K78 carries the post-translational modification N6-lactoyllysine; alternate. K78 and K80 each carry N6-propionyllysine; alternate. K78 is modified (N6-succinyllysine). K80 is subject to N6-acetyllysine. The residue at position 89 (Y89) is a Phosphotyrosine. N6-(2-hydroxyisobutyryl)lysine; alternate is present on K92. At K92 the chain carries N6-butyryllysine; alternate. N6-glutaryllysine; alternate is present on K92. K92 is modified (N6-lactoyllysine; alternate). K92 is subject to N6-propionyllysine; alternate. N6-succinyllysine; alternate is present on K92. N6-acetyllysine; alternate is present on K92. A Glycyl lysine isopeptide (Lys-Gly) (interchain with G-Cter in ubiquitin); alternate cross-link involves residue K92.

It belongs to the histone H4 family. In terms of assembly, the nucleosome is a histone octamer containing two molecules each of H2A, H2B, H3 and H4 assembled in one H3-H4 heterotetramer and two H2A-H2B heterodimers. The octamer wraps approximately 147 bp of DNA. In terms of processing, acetylation at Lys-6 (H4K5ac), Lys-9 (H4K8ac), Lys-13 (H4K12ac) and Lys-17 (H4K16ac) occurs in coding regions of the genome but not in heterochromatin. Citrullination at Arg-4 (H4R3ci) by PADI4 impairs methylation. Post-translationally, monomethylation and asymmetric dimethylation at Arg-4 (H4R3me1 and H4R3me2a, respectively) by PRMT1 favors acetylation at Lys-9 (H4K8ac) and Lys-13 (H4K12ac). Demethylation is performed by JMJD6. Symmetric dimethylation on Arg-4 (H4R3me2s) by the PRDM1/PRMT5 complex may play a crucial role in the germ-cell lineage. In terms of processing, monomethylated, dimethylated or trimethylated at Lys-21 (H4K20me1, H4K20me2, H4K20me3). Monomethylation is performed by KMT5A/SET8. Trimethylation is performed by KMT5B and KMT5C and induces gene silencing. Monomethylated at Lys-13 (H4K12me1) by N6AMT1; H4K12me1 modification is present at the promoters of numerous genes encoding cell cycle regulators. Acetyl-methylated at Lys-6 and Lys-13 (H4K5acme and H4K12acme, respectively), acetyl-methylation is an epigenetic mark of active chromatin associated with increased transcriptional initiation. Acetyl-methylation is formed by acetylation by EP300/p300 of lysine residues that are already monomethylated on the same side chain. H4K5acme and H4K12acme marks specifically bind BRD2. Post-translationally, ubiquitinated by the CUL4-DDB-RBX1 complex in response to ultraviolet irradiation. This may weaken the interaction between histones and DNA and facilitate DNA accessibility to repair proteins. Monoubiquitinated at Lys-92 of histone H4 (H4K91ub1) in response to DNA damage. The exact role of H4K91ub1 in DNA damage response is still unclear but it may function as a licensing signal for additional histone H4 post-translational modifications such as H4 Lys-21 methylation (H4K20me). In terms of processing, sumoylated, which is associated with transcriptional repression. Butyrylation of histones marks active promoters and competes with histone acetylation. Post-translationally, glutarylation at Lys-92 (H4K91glu) destabilizes nucleosomes by promoting dissociation of the H2A-H2B dimers from nucleosomes. In terms of processing, ufmylated; monofmylated by UFL1 at Lys-32 (H4K31Ufm1) in response to DNA damage. Lactylated in macrophages by EP300/P300 by using lactoyl-CoA directly derived from endogenous or exogenous lactate, leading to stimulates gene transcription. Delactylated by SIRT3 at Lys-17 (H4K16la).

The protein resides in the nucleus. The protein localises to the chromosome. Functionally, core component of nucleosome. Nucleosomes wrap and compact DNA into chromatin, limiting DNA accessibility to the cellular machineries which require DNA as a template. Histones thereby play a central role in transcription regulation, DNA repair, DNA replication and chromosomal stability. DNA accessibility is regulated via a complex set of post-translational modifications of histones, also called histone code, and nucleosome remodeling. This Gallus gallus (Chicken) protein is Histone H4 type VIII (H4-VIII).